Consider the following 119-residue polypeptide: Ribonuclease P protein component (119 aa).

It belongs to the RnpA family. As to quaternary structure, consists of a catalytic RNA component (M1 or rnpB) and a protein subunit.

It catalyses the reaction Endonucleolytic cleavage of RNA, removing 5'-extranucleotides from tRNA precursor.. Its function is as follows. RNaseP catalyzes the removal of the 5'-leader sequence from pre-tRNA to produce the mature 5'-terminus. It can also cleave other RNA substrates such as 4.5S RNA. The protein component plays an auxiliary but essential role in vivo by binding to the 5'-leader sequence and broadening the substrate specificity of the ribozyme. This chain is Ribonuclease P protein component, found in Salmonella schwarzengrund (strain CVM19633).